A 348-amino-acid chain; its full sequence is Flagellar P-ring protein (348 aa).

The N-terminal stretch at 1–16 (MRVLTIFLLFMTSIFA) is a signal peptide.

The protein belongs to the FlgI family. In terms of assembly, the basal body constitutes a major portion of the flagellar organelle and consists of four rings (L,P,S, and M) mounted on a central rod.

It is found in the periplasm. Its subcellular location is the bacterial flagellum basal body. Functionally, assembles around the rod to form the L-ring and probably protects the motor/basal body from shearing forces during rotation. The polypeptide is Flagellar P-ring protein (Campylobacter jejuni subsp. jejuni serotype O:23/36 (strain 81-176)).